We begin with the raw amino-acid sequence, 256 residues long: Pro-thyrotropin-releasing hormone (256 aa).

The N-terminal stretch at 1–24 (MQGPWLMMALALIFVLTGIPKSCA) is a signal peptide. Disordered stretches follow at residues 76 to 128 (RQHP…EGDS) and 151 to 215 (VKRQ…HPCG). Proline amide occurs at positions 79, 111, 156, and 174. A compositionally biased stretch (basic residues) spans 104-113 (RPHKRQHPGR). Over residues 177–188 (RFIDPELQRSWE) the composition is skewed to basic and acidic residues. Pro-205 is modified (proline amide).

This sequence belongs to the TRH family. Specifically expressed in hypothalamus and testis.

The protein localises to the secreted. Functionally, functions as a regulator of the biosynthesis of TSH in the anterior pituitary gland and as a neurotransmitter/ neuromodulator in the central and peripheral nervous systems. The polypeptide is Pro-thyrotropin-releasing hormone (Trh) (Mus musculus (Mouse)).